The primary structure comprises 311 residues: Homeobox-leucine zipper protein HOX13 (311 aa).

The interval 1 to 74 is disordered; the sequence is MKRPTSSSRK…PSCGLGEKKR (74 aa). A compositionally biased stretch (acidic residues) spans 35 to 54; it reads DEAEMEEVDEEEEEEVDEDM. The segment at residues 69 to 128 is a DNA-binding region (homeobox); that stretch reads LGEKKRRLALEQVRALERSFDTDNKLDPDRKARIARDLGLQPRQVAVWFQNRRARWKTKQ. The tract at residues 127 to 171 is leucine-zipper; that stretch reads KQLERDFAALRARHDALRADCDALRRDKDALAAEIRELREKLPTK.

It belongs to the HD-ZIP homeobox family. Class I subfamily. In terms of tissue distribution, expressed in seedlings, roots, stems, leaf sheaths and blades and panicles.

It localises to the nucleus. In terms of biological role, probable transcription factor. The chain is Homeobox-leucine zipper protein HOX13 (HOX13) from Oryza sativa subsp. japonica (Rice).